The following is a 157-amino-acid chain: S-ribosylhomocysteine lyase (157 aa).

His-54, His-58, and Cys-124 together coordinate Fe cation.

It belongs to the LuxS family. Homodimer. Requires Fe cation as cofactor.

It carries out the reaction S-(5-deoxy-D-ribos-5-yl)-L-homocysteine = (S)-4,5-dihydroxypentane-2,3-dione + L-homocysteine. Functionally, involved in the synthesis of autoinducer 2 (AI-2) which is secreted by bacteria and is used to communicate both the cell density and the metabolic potential of the environment. The regulation of gene expression in response to changes in cell density is called quorum sensing. Catalyzes the transformation of S-ribosylhomocysteine (RHC) to homocysteine (HC) and 4,5-dihydroxy-2,3-pentadione (DPD). This is S-ribosylhomocysteine lyase from Levilactobacillus brevis (strain ATCC 367 / BCRC 12310 / CIP 105137 / JCM 1170 / LMG 11437 / NCIMB 947 / NCTC 947) (Lactobacillus brevis).